Here is a 637-residue protein sequence, read N- to C-terminus: Threonine--tRNA ligase (637 aa).

The 65-residue stretch at 1–65 (MIAIQLPDGS…EADEALSIIT (65 aa)) folds into the TGS domain. Residues 246 to 537 (DHRKLGRELD…LIEEHAGALP (292 aa)) form a catalytic region. The Zn(2+) site is built by cysteine 337, histidine 388, and histidine 514.

It belongs to the class-II aminoacyl-tRNA synthetase family. As to quaternary structure, homodimer. It depends on Zn(2+) as a cofactor.

The protein resides in the cytoplasm. The catalysed reaction is tRNA(Thr) + L-threonine + ATP = L-threonyl-tRNA(Thr) + AMP + diphosphate + H(+). Catalyzes the attachment of threonine to tRNA(Thr) in a two-step reaction: L-threonine is first activated by ATP to form Thr-AMP and then transferred to the acceptor end of tRNA(Thr). Also edits incorrectly charged L-seryl-tRNA(Thr). The polypeptide is Threonine--tRNA ligase (Leptothrix cholodnii (strain ATCC 51168 / LMG 8142 / SP-6) (Leptothrix discophora (strain SP-6))).